An 84-amino-acid polypeptide reads, in one-letter code: Large ribosomal subunit protein bL27 (84 aa).

The disordered stretch occupies residues 1–22 (MAHKKGASSTRNGRDSNAQRLG). The segment covering 7-19 (ASSTRNGRDSNAQ) has biased composition (polar residues).

This sequence belongs to the bacterial ribosomal protein bL27 family.

The sequence is that of Large ribosomal subunit protein bL27 from Streptomyces coelicolor (strain ATCC BAA-471 / A3(2) / M145).